The chain runs to 130 residues: Small ribosomal subunit protein uS11c (130 aa).

It belongs to the universal ribosomal protein uS11 family. In terms of assembly, part of the 30S ribosomal subunit.

It localises to the plastid. The protein resides in the chloroplast. The protein is Small ribosomal subunit protein uS11c of Physcomitrium patens (Spreading-leaved earth moss).